The chain runs to 286 residues: 33 kDa chaperonin (286 aa).

Disulfide bonds link Cys225–Cys227 and Cys258–Cys261.

Belongs to the HSP33 family. In terms of processing, under oxidizing conditions two disulfide bonds are formed involving the reactive cysteines. Under reducing conditions zinc is bound to the reactive cysteines and the protein is inactive.

The protein resides in the cytoplasm. Functionally, redox regulated molecular chaperone. Protects both thermally unfolding and oxidatively damaged proteins from irreversible aggregation. Plays an important role in the bacterial defense system toward oxidative stress. This chain is 33 kDa chaperonin, found in Shewanella putrefaciens (strain CN-32 / ATCC BAA-453).